We begin with the raw amino-acid sequence, 348 residues long: MADTFFFTPSRRLTVANVAELTGAKLLNPEFSNIVISTLSSLEGAGEGSLVFVEHRKFSDALLGSSAVAVFCTNEIVFKVPESMAILVTSTPQRDFAQIGRILFPDSVKPMPWFGQREISPYAHIHPSAKFGHDVCIEAGAVIGKNVEIGSGSLISSTAVIGENCRIGRDCYIAPKVTVQYSLIGDRVYLYPGTCIGQDGFGYVGGASGIEKVPQLGRVIIKDGVEIGANTTIDRGTFEDTIIGEGSKIDNLVQIAHNVKIGRYCLIAAQCGIAGSTSIGDMSQLGGSVGVADHIVIGKCVQIAAGSGVMNDIPDGEKWGGSPARPFKQWFREVAALRNIGKVKKEKR.

His-257 acts as the Proton acceptor in catalysis.

This sequence belongs to the transferase hexapeptide repeat family. LpxD subfamily. As to quaternary structure, homotrimer.

It carries out the reaction a UDP-3-O-[(3R)-3-hydroxyacyl]-alpha-D-glucosamine + a (3R)-hydroxyacyl-[ACP] = a UDP-2-N,3-O-bis[(3R)-3-hydroxyacyl]-alpha-D-glucosamine + holo-[ACP] + H(+). The protein operates within bacterial outer membrane biogenesis; LPS lipid A biosynthesis. Functionally, catalyzes the N-acylation of UDP-3-O-acylglucosamine using 3-hydroxyacyl-ACP as the acyl donor. Is involved in the biosynthesis of lipid A, a phosphorylated glycolipid that anchors the lipopolysaccharide to the outer membrane of the cell. This Bartonella quintana (strain Toulouse) (Rochalimaea quintana) protein is UDP-3-O-acylglucosamine N-acyltransferase.